We begin with the raw amino-acid sequence, 323 residues long: Germacrene A synthase (323 aa).

The Mg(2+) site is built by D82, D86, N222, S226, and E230. Residues 82–86 carry the DDXXD motif motif; the sequence is DDQCD.

Belongs to the terpene synthase family. Mg(2+) serves as cofactor.

The enzyme catalyses (2E,6E)-farnesyl diphosphate = 5-epi-alpha-selinene + diphosphate. Catalyzes the cyclization of farnesyl diphosphate (FPP) to the sesquiterpene germacrene A. In Nostoc punctiforme (strain ATCC 29133 / PCC 73102), this protein is Germacrene A synthase.